Here is a 213-residue protein sequence, read N- to C-terminus: Proteasome subunit beta (213 aa).

A propeptide spans 1-11 (MSMIEEKIYKG) (removed in mature form; by autocatalysis). Catalysis depends on Thr-12, which acts as the Nucleophile.

This sequence belongs to the peptidase T1B family. In terms of assembly, the 20S proteasome core is composed of 14 alpha and 14 beta subunits that assemble into four stacked heptameric rings, resulting in a barrel-shaped structure. The two inner rings, each composed of seven catalytic beta subunits, are sandwiched by two outer rings, each composed of seven alpha subunits. The catalytic chamber with the active sites is on the inside of the barrel. Has probably a gated structure, the ends of the cylinder being occluded by the N-termini of the alpha-subunits. Is likely capped at one or both ends by the proteasome regulatory ATPase, PAN.

It is found in the cytoplasm. It catalyses the reaction Cleavage of peptide bonds with very broad specificity.. Its activity is regulated as follows. The formation of the proteasomal ATPase PAN-20S proteasome complex, via the docking of the C-termini of PAN into the intersubunit pockets in the alpha-rings, triggers opening of the gate for substrate entry. Interconversion between the open-gate and close-gate conformations leads to a dynamic regulation of the 20S proteasome proteolysis activity. Its function is as follows. Component of the proteasome core, a large protease complex with broad specificity involved in protein degradation. The sequence is that of Proteasome subunit beta from Archaeoglobus fulgidus (strain ATCC 49558 / DSM 4304 / JCM 9628 / NBRC 100126 / VC-16).